The following is a 102-amino-acid chain: Glutaredoxin 1 (102 aa).

Residues 1–96 (MNKAILHTII…KLLEGQPKKK (96 aa)) form the Glutaredoxin domain. Residues Cys17 and Cys20 are joined by a disulfide bond.

Belongs to the glutaredoxin family. Monomer.

The protein localises to the cytoplasm. Has a glutathione-disulfide oxidoreductase activity in the presence of NADPH and glutathione reductase. Reduces low molecular weight disulfides and proteins. The protein is Glutaredoxin 1 (grxC1) of Rickettsia felis (strain ATCC VR-1525 / URRWXCal2) (Rickettsia azadi).